The following is a 152-amino-acid chain: UPF0266 membrane protein YobD (152 aa).

3 consecutive transmembrane segments (helical) span residues 6 to 26 (LVLI…QFIM), 45 to 65 (VDSV…VTSH), and 67 to 87 (AQMT…IFWI).

The protein belongs to the UPF0266 family.

It is found in the cell inner membrane. The polypeptide is UPF0266 membrane protein YobD (Salmonella newport (strain SL254)).